The sequence spans 298 residues: uncharacterized protein (298 aa).

This is an uncharacterized protein from Orgyia pseudotsugata multicapsid polyhedrosis virus (OpMNPV).